A 155-amino-acid polypeptide reads, in one-letter code: Small ribosomal subunit protein uS7cz/uS7cy (155 aa).

Belongs to the universal ribosomal protein uS7 family. As to quaternary structure, part of the 30S ribosomal subunit.

The protein localises to the plastid. It is found in the chloroplast. Its function is as follows. One of the primary rRNA binding proteins, it binds directly to 16S rRNA where it nucleates assembly of the head domain of the 30S subunit. This is Small ribosomal subunit protein uS7cz/uS7cy (rps7-A) from Atropa belladonna (Belladonna).